A 140-amino-acid chain; its full sequence is Small ribosomal subunit protein uS12 (140 aa).

Disordered regions lie at residues 1-20 (MPTI…VKSD) and 35-55 (QTNV…TMTP). A 3-methylthioaspartic acid modification is found at D102. Positions 121 to 140 (DGRMQGRSKYGTKRPKAAKK) are disordered. The segment covering 130 to 140 (YGTKRPKAAKK) has biased composition (basic residues).

This sequence belongs to the universal ribosomal protein uS12 family. As to quaternary structure, part of the 30S ribosomal subunit. Contacts proteins S8 and S17. May interact with IF1 in the 30S initiation complex.

Functionally, with S4 and S5 plays an important role in translational accuracy. In terms of biological role, interacts with and stabilizes bases of the 16S rRNA that are involved in tRNA selection in the A site and with the mRNA backbone. Located at the interface of the 30S and 50S subunits, it traverses the body of the 30S subunit contacting proteins on the other side and probably holding the rRNA structure together. The combined cluster of proteins S8, S12 and S17 appears to hold together the shoulder and platform of the 30S subunit. This Exiguobacterium sp. (strain ATCC BAA-1283 / AT1b) protein is Small ribosomal subunit protein uS12.